A 286-amino-acid chain; its full sequence is Shikimate dehydrogenase (NADP(+)) (286 aa).

Shikimate is bound by residues 21 to 23 (TLS) and threonine 68. Lysine 72 acts as the Proton acceptor in catalysis. Residue aspartate 84 participates in NADP(+) binding. Residues asparagine 93 and aspartate 108 each coordinate shikimate. NADP(+)-binding positions include 132-136 (GYGGA) and leucine 226. Shikimate is bound at residue tyrosine 228. Glycine 249 is an NADP(+) binding site.

It belongs to the shikimate dehydrogenase family. As to quaternary structure, homodimer.

The catalysed reaction is shikimate + NADP(+) = 3-dehydroshikimate + NADPH + H(+). It participates in metabolic intermediate biosynthesis; chorismate biosynthesis; chorismate from D-erythrose 4-phosphate and phosphoenolpyruvate: step 4/7. Involved in the biosynthesis of the chorismate, which leads to the biosynthesis of aromatic amino acids. Catalyzes the reversible NADPH linked reduction of 3-dehydroshikimate (DHSA) to yield shikimate (SA). In Thermosynechococcus vestitus (strain NIES-2133 / IAM M-273 / BP-1), this protein is Shikimate dehydrogenase (NADP(+)).